A 775-amino-acid polypeptide reads, in one-letter code: Subtilisin-like protease SBT1.2 (775 aa).

The first 20 residues, 1–20 (MEPKPFFLCIIFLLFCSSSS), serve as a signal peptide directing secretion. Positions 27-111 (TYIVQLHPNS…AVRPDHVLQV (85 aa)) constitute an Inhibitor I9 domain. In terms of domain architecture, Peptidase S8 spans 116–618 (SYKFLGLDGF…AGHVNPQKAI (503 aa)). Residues aspartate 146 and histidine 222 each act as charge relay system in the active site. One can recognise a PA domain in the interval 388–470 (GGDKGSEFCL…YTESVLLKAY (83 aa)). N-linked (GlcNAc...) asparagine glycans are attached at residues asparagine 472 and asparagine 544. Serine 552 (charge relay system) is an active-site residue. An N-linked (GlcNAc...) asparagine glycan is attached at asparagine 652.

Belongs to the peptidase S8 family. Mostly expressed in leaves and cotyledons (especially in epidermal cells), and, to a lower extent, in floral buds, stems, and siliques. Strongly expressed in stomatal precursor cells (meristemoids and guard mother cells).

It is found in the secreted. The protein resides in the extracellular space. Its subcellular location is the apoplast. It localises to the cell membrane. Its function is as follows. Serine protease involved in the negative regulation of stomatal density and distribution. Not active on EPFL6 (AC Q1PEY6). Positive regulator of water use efficiency (WUE). This Arabidopsis thaliana (Mouse-ear cress) protein is Subtilisin-like protease SBT1.2.